The primary structure comprises 304 residues: Rhodopsin (304 aa).

Topologically, residues 1–13 are extracellular; it reads YEYPQYYLVNPAA. The helical transmembrane segment at 14-38 threads the bilayer; that stretch reads YAALGAYMFLLILVGFPINFLTLYV. Residues 39–50 are Cytoplasmic-facing; sequence TIEHKKLRTPLN. A helical membrane pass occupies residues 51 to 73; it reads YILLNLAVANLFMVFGGFTTTMF. Over 74 to 87 the chain is Extracellular; the sequence is TSIRGYFVLGHLGC. A disulfide bond links C87 and C164. A helical transmembrane segment spans residues 88–110; that stretch reads NLEGFFATLSGEIALWSLVVLAI. The short motif at 111-113 is the 'Ionic lock' involved in activated form stabilization element; it reads ERW. Topologically, residues 111–129 are cytoplasmic; it reads ERWVVVCKPISNFRFGENH. A helical membrane pass occupies residues 130-150; it reads AIMGLAFTWTMAMACAAPPLV. Residues 151–179 are Extracellular-facing; it reads GWSRYIPEGMQCSCGIDYYTRAEGFNNES. An N-linked (GlcNAc...) asparagine glycan is attached at N177. Residues 180-201 form a helical membrane-spanning segment; it reads FVVYMFTCHFMTPLTIVFFCYG. Residues 202-229 lie on the Cytoplasmic side of the membrane; the sequence is RLLCAVKEAAAAQQESETTQRAEREVTR. The helical transmembrane segment at 230–251 threads the bilayer; sequence MVVIMVIAFLICWCPYAGVAWF. At 252-263 the chain is on the extracellular side; that stretch reads IFTHQGSEFGPV. Residues 264–285 form a helical membrane-spanning segment; it reads FMTIPAFFAKSSSIYNPMIYIC. At K273 the chain carries N6-(retinylidene)lysine. Residues 286 to 304 are Cytoplasmic-facing; sequence LNKQFRHCMITTLCCGKKA. 2 S-palmitoyl cysteine lipidation sites follow: C299 and C300.

This sequence belongs to the G-protein coupled receptor 1 family. Opsin subfamily. In terms of processing, phosphorylated on some or all of the serine and threonine residues present in the C-terminal region. Contains one covalently linked retinal chromophore.

It localises to the membrane. Its subcellular location is the cell projection. It is found in the cilium. The protein localises to the photoreceptor outer segment. In terms of biological role, photoreceptor required for image-forming vision at low light intensity. While most salt water fish species use retinal as chromophore, most freshwater fish use 3-dehydroretinal, or a mixture of retinal and 3-dehydroretinal. Light-induced isomerization of 11-cis to all-trans retinal triggers a conformational change that activates signaling via G-proteins. Subsequent receptor phosphorylation mediates displacement of the bound G-protein alpha subunit by arrestin and terminates signaling. This Ictalurus punctatus (Channel catfish) protein is Rhodopsin (rho).